The chain runs to 106 residues: ATP-dependent Clp protease adapter protein ClpS (106 aa).

This sequence belongs to the ClpS family. As to quaternary structure, binds to the N-terminal domain of the chaperone ClpA.

Its function is as follows. Involved in the modulation of the specificity of the ClpAP-mediated ATP-dependent protein degradation. The sequence is that of ATP-dependent Clp protease adapter protein ClpS from Vibrio parahaemolyticus serotype O3:K6 (strain RIMD 2210633).